A 476-amino-acid polypeptide reads, in one-letter code: MDYFPVFLNIKQRNCLIVGGGSVAARKAKLLLRAGAHIHVVSPTINAEFTGLLQQFSSISHNAETFRPDHLQGRVLVIAATHDRATNQAVSVAARKAGIPVNVVDNPDLCTFIMPSILDRSPIIVAVSSGGGSPVLARLLRARLEALIPAAYGRLATYAAQFRGQVRQHFSRQENRRFFWEKMLQGPFAEMVFAGKDQAAQDYLLETLNNSVDQPPIGEVYLVGAGPGDPDLLTFRAMRLMQQADVVIYDRLVAPAILDMVRQDADRIYAGKERNRHTLPQTSINNLLIKLAQEGKRVLRLKGGDPFIFGRGGEEIETLSQHQIPFQVVPGITAASGVASYAGIPLTHRDYAHSCVFVTGHLKDNTVQLDWSALARPNQTIVVYMGLLGVSELCRQLIAHGLPKTTPAAIIQQGTTPNQCVLTGTLATLPTIIQENPLKPPTLIIVGEVVKLRQRLAWFNSTSESLGNTPGYSKHP.

Positions 1–204 are precorrin-2 dehydrogenase /sirohydrochlorin ferrochelatase; that stretch reads MDYFPVFLNI…GKDQAAQDYL (204 aa). NAD(+)-binding positions include 22-23 and 43-44; these read SV and PT. A Phosphoserine modification is found at Ser129. The interval 218-476 is uroporphyrinogen-III C-methyltransferase; sequence GEVYLVGAGP…GNTPGYSKHP (259 aa). Pro227 provides a ligand contact to S-adenosyl-L-methionine. Asp250 functions as the Proton acceptor in the catalytic mechanism. The active-site Proton donor is Lys272. S-adenosyl-L-methionine-binding positions include 303–305, Ile308, 333–334, Met385, and Gly414; these read GGD and TA.

The protein in the N-terminal section; belongs to the precorrin-2 dehydrogenase / sirohydrochlorin ferrochelatase family. This sequence in the C-terminal section; belongs to the precorrin methyltransferase family.

It carries out the reaction uroporphyrinogen III + 2 S-adenosyl-L-methionine = precorrin-2 + 2 S-adenosyl-L-homocysteine + H(+). It catalyses the reaction precorrin-2 + NAD(+) = sirohydrochlorin + NADH + 2 H(+). The enzyme catalyses siroheme + 2 H(+) = sirohydrochlorin + Fe(2+). Its pathway is cofactor biosynthesis; adenosylcobalamin biosynthesis; precorrin-2 from uroporphyrinogen III: step 1/1. It participates in cofactor biosynthesis; adenosylcobalamin biosynthesis; sirohydrochlorin from precorrin-2: step 1/1. The protein operates within porphyrin-containing compound metabolism; siroheme biosynthesis; precorrin-2 from uroporphyrinogen III: step 1/1. It functions in the pathway porphyrin-containing compound metabolism; siroheme biosynthesis; siroheme from sirohydrochlorin: step 1/1. Its pathway is porphyrin-containing compound metabolism; siroheme biosynthesis; sirohydrochlorin from precorrin-2: step 1/1. Multifunctional enzyme that catalyzes the SAM-dependent methylations of uroporphyrinogen III at position C-2 and C-7 to form precorrin-2 via precorrin-1. Then it catalyzes the NAD-dependent ring dehydrogenation of precorrin-2 to yield sirohydrochlorin. Finally, it catalyzes the ferrochelation of sirohydrochlorin to yield siroheme. This is Siroheme synthase from Nitrosomonas eutropha (strain DSM 101675 / C91 / Nm57).